We begin with the raw amino-acid sequence, 97 residues long: Putative pterin-4-alpha-carbinolamine dehydratase (97 aa).

The protein belongs to the pterin-4-alpha-carbinolamine dehydratase family.

The catalysed reaction is (4aS,6R)-4a-hydroxy-L-erythro-5,6,7,8-tetrahydrobiopterin = (6R)-L-erythro-6,7-dihydrobiopterin + H2O. The chain is Putative pterin-4-alpha-carbinolamine dehydratase from Saccharolobus solfataricus (strain ATCC 35092 / DSM 1617 / JCM 11322 / P2) (Sulfolobus solfataricus).